The chain runs to 227 residues: AN1-type zinc finger protein 3 (227 aa).

Residues 12 to 44 (PSLPPRCPCGFWGSSKTMNLCSKCFADFQKKQP) form an A20-type zinc finger. Zn(2+) is bound by residues Cys-18, Cys-20, Cys-32, and Cys-35. Disordered regions lie at residues 41 to 99 (KKQP…TEEC) and 113 to 151 (PTKR…RSKQ). Low complexity-rich tracts occupy residues 49 to 59 (TPSTSNSQSDL) and 66 to 77 (SDNNNTSVTTPT). Composition is skewed to polar residues over residues 78-96 (LSPS…SPST) and 113-127 (PTKR…SENE). Positions 135–148 (RLVENPERPEESGR) are enriched in basic and acidic residues. The segment at 151 to 200 (QKSRRRCFQCQTKLELVQQELGSCRCGYVFCMLHRLPEQHDCTFDHMGRG) adopts an AN1-type zinc-finger fold. Zn(2+) contacts are provided by Cys-157, Cys-160, Cys-174, Cys-176, Cys-181, His-184, His-190, and Cys-192.

In terms of tissue distribution, expressed in testis.

In Mus musculus (Mouse), this protein is AN1-type zinc finger protein 3 (Zfand3).